A 131-amino-acid polypeptide reads, in one-letter code: D-ribose pyranase (131 aa).

Residue His-20 is the Proton donor of the active site. Substrate contacts are provided by residues Asp-28, His-98, and 120–122 (YAN).

The protein belongs to the RbsD / FucU family. RbsD subfamily. In terms of assembly, homodecamer.

Its subcellular location is the cytoplasm. It catalyses the reaction beta-D-ribopyranose = beta-D-ribofuranose. It participates in carbohydrate metabolism; D-ribose degradation; D-ribose 5-phosphate from beta-D-ribopyranose: step 1/2. Catalyzes the interconversion of beta-pyran and beta-furan forms of D-ribose. The polypeptide is D-ribose pyranase (Bacillus thuringiensis (strain Al Hakam)).